Here is a 520-residue protein sequence, read N- to C-terminus: Cholesterol side-chain cleavage enzyme, mitochondrial (520 aa).

The N-terminal 39 residues, 1-39, are a transit peptide targeting the mitochondrion; sequence MLVRGLPLRSVLVKGCQPLLSAPREGPGHPRVPTGEGAG. Residues 19–47 are disordered; the sequence is LLSAPREGPGHPRVPTGEGAGMSSHSPRP. Cys-461 contacts heme.

Belongs to the cytochrome P450 family. In terms of assembly, interacts with FDX1/adrenodoxin. It depends on heme as a cofactor.

The protein resides in the mitochondrion inner membrane. The catalysed reaction is 6 reduced [adrenodoxin] + cholesterol + 3 O2 + 6 H(+) = 4-methylpentanal + pregnenolone + 6 oxidized [adrenodoxin] + 4 H2O. It carries out the reaction 2 reduced [adrenodoxin] + cholesterol + O2 + 2 H(+) = (22R)-hydroxycholesterol + 2 oxidized [adrenodoxin] + H2O. The enzyme catalyses (22R)-hydroxycholesterol + 2 reduced [adrenodoxin] + O2 + 2 H(+) = (20R,22R)-20,22-dihydroxycholesterol + 2 oxidized [adrenodoxin] + H2O. It catalyses the reaction (20R,22R)-20,22-dihydroxycholesterol + 2 reduced [adrenodoxin] + O2 + 2 H(+) = 4-methylpentanal + pregnenolone + 2 oxidized [adrenodoxin] + 2 H2O. It participates in lipid metabolism; C21-steroid hormone metabolism. It functions in the pathway steroid metabolism; cholesterol metabolism. Its function is as follows. A cytochrome P450 monooxygenase that catalyzes the side-chain hydroxylation and cleavage of cholesterol to pregnenolone, the precursor of most steroid hormones. Catalyzes three sequential oxidation reactions of cholesterol, namely the hydroxylation at C22 followed with the hydroxylation at C20 to yield 20R,22R-hydroxycholesterol that is further cleaved between C20 and C22 to yield the C21-steroid pregnenolone and 4-methylpentanal. Mechanistically, uses molecular oxygen inserting one oxygen atom into a substrate and reducing the second into a water molecule. Two electrons are provided by NADPH via a two-protein mitochondrial transfer system comprising flavoprotein FDXR (adrenodoxin/ferredoxin reductase) and nonheme iron-sulfur protein FDX1 or FDX2 (adrenodoxin/ferredoxin). This is Cholesterol side-chain cleavage enzyme, mitochondrial (CYP11A1) from Equus caballus (Horse).